We begin with the raw amino-acid sequence, 207 residues long: Ribosomal RNA small subunit methyltransferase G (207 aa).

Residues G74, L79, 125-126 (VE), and R140 each bind S-adenosyl-L-methionine.

This sequence belongs to the methyltransferase superfamily. RNA methyltransferase RsmG family.

It localises to the cytoplasm. The enzyme catalyses guanosine(527) in 16S rRNA + S-adenosyl-L-methionine = N(7)-methylguanosine(527) in 16S rRNA + S-adenosyl-L-homocysteine. In terms of biological role, specifically methylates the N7 position of guanine in position 527 of 16S rRNA. In Shewanella halifaxensis (strain HAW-EB4), this protein is Ribosomal RNA small subunit methyltransferase G.